Reading from the N-terminus, the 221-residue chain is 2-phospho-L-lactate guanylyltransferase (221 aa).

Belongs to the CofC family. Homodimer.

The catalysed reaction is (2S)-2-phospholactate + GTP + H(+) = (2S)-lactyl-2-diphospho-5'-guanosine + diphosphate. It functions in the pathway cofactor biosynthesis; coenzyme F420 biosynthesis. Guanylyltransferase that catalyzes the activation of (2S)-2-phospholactate (2-PL) as (2S)-lactyl-2-diphospho-5'-guanosine, via the condensation of 2-PL with GTP. It is involved in the biosynthesis of coenzyme F420, a hydride carrier cofactor. This Methanothrix thermoacetophila (strain DSM 6194 / JCM 14653 / NBRC 101360 / PT) (Methanosaeta thermophila) protein is 2-phospho-L-lactate guanylyltransferase.